Consider the following 794-residue polypeptide: MQVENLHTSVACNRCTECADWGPNGWIAYGACNAIAIMDPKFQGNSAKVLFTLVEHTKRVNTVRWLDCDKLLSGGDDAIAILWELDETGTTKSFTLKGHTSGVNTVDGIRQQDGSWLLATAAADTTIKLWTFQDNNYVCFQTISLSDGFCFCLRLQLLPKSNQVLLAFSGDDETVSLWSEQVETAGEGDSLGRQFQRKHKLTGHEDWVRGLDFVVDGEDLLLASGSQDNFIRLWRIAPRSKEQMQENRVDLHQLSHNDDEIKVEEKILQLGKEAWYAVSLESVLYGHEGWIYGVHWHKTPDQELRLLSASIDKTVIIWAPTEEGIWLEEVRVGEVGGNSVGFYGGKFSGDGHSIMAHSYQGGFHIWSQDPDRPQLWTPGVIVGGHYGEVRDLAWEHSGAYLMTASADQTTRLHAPWLQDGANPTWHELARPQIHGYDMQALALLSRYKFASGAEEKIVRTFQAPANFIENFRHISGIENDDAGDVLLDSLPKGASVPSLGLSNKAVYKVDSEVESTSKTSKDEYPDNYFVPIALETPPQEETLMQNTLWPELQKLYGHGYEIFALAATADGSLLASTCKASNAEHAQIILWNPSNWKQIQKLSGHQLTVTQLSFSPDSRYLLSVSRDRRWCLYERQDSSVSYQLVASTDKSNGVHTRIIWSCDWSHDGQFFVTSSRDGKVVVWKKEEDCKESSLNGWQANGVLELKNESITAVAFSNSYLSGTDDTYILALGTETGLIKIYQFVRGAWKLLSDLNKSQAHHLTVRRLQFRPGKQLQLASCGEDHLVRIYDIKLT.

13 WD repeats span residues 55 to 93, 98 to 140, 147 to 188, 203 to 244, 286 to 328, 337 to 376, 384 to 423, 433 to 472, 557 to 601, 604 to 643, 654 to 693, 705 to 751, and 759 to 794; these read EHTK…TTKS, GHTS…YVCF, DGFC…AGEG, GHED…KEQM, GHEG…IWLE, GNSV…PQLW, GHYG…GANP, IHGY…ENFR, GHGY…QIQK, GHQL…VSYQ, VHTR…KESS, LKNE…WKLL, and AHHL…IKLT.

Belongs to the WD repeat ELP2 family. In terms of assembly, component of the elongator complex composed of Elp1, Elp2, Elp3, Elp4, Elp5 and Elp6. The elongator complex associates with and stabilizes microtubules; efficient interaction requires the full complex.

The protein resides in the cytoplasm. It localises to the nucleus. The protein localises to the cytoskeleton. It is found in the spindle. Its pathway is tRNA modification; 5-methoxycarbonylmethyl-2-thiouridine-tRNA biosynthesis. Its function is as follows. Component of the elongator complex, which is required for multiple tRNA modifications, including mcm5U (5-methoxycarbonylmethyl uridine), mcm5s2U (5-methoxycarbonylmethyl-2-thiouridine), and ncm5U (5-carbamoylmethyl uridine). The elongator complex catalyzes the formation of carboxymethyluridine in the wobble base at position 34 in tRNAs. Binding by the elongator complex stabilizes microtubules and promotes their growth. This induces central spindle asymmetry, promoting polarized signaling endosome trafficking during asymmetric cell division and cell fate assignation of sensory organ precursor cells. Involved in the regulation of the STAT pathway. The polypeptide is Elongator complex protein 2 (Drosophila melanogaster (Fruit fly)).